The primary structure comprises 240 residues: Adenosine 5'-phosphosulfate reductase (240 aa).

4 residues coordinate [4Fe-4S] cluster: cysteine 125, cysteine 126, cysteine 208, and cysteine 211. Catalysis depends on cysteine 234, which acts as the Nucleophile; cysteine thiosulfonate intermediate.

This sequence belongs to the PAPS reductase family. CysH subfamily. [4Fe-4S] cluster is required as a cofactor.

The protein localises to the cytoplasm. It catalyses the reaction [thioredoxin]-disulfide + sulfite + AMP + 2 H(+) = adenosine 5'-phosphosulfate + [thioredoxin]-dithiol. Its pathway is sulfur metabolism; hydrogen sulfide biosynthesis; sulfite from sulfate. Its function is as follows. Catalyzes the formation of sulfite from adenosine 5'-phosphosulfate (APS) using thioredoxin as an electron donor. The chain is Adenosine 5'-phosphosulfate reductase from Oceanobacillus iheyensis (strain DSM 14371 / CIP 107618 / JCM 11309 / KCTC 3954 / HTE831).